Here is a 227-residue protein sequence, read N- to C-terminus: Phosphoribosylformylglycinamidine synthase subunit PurQ (227 aa).

The Glutamine amidotransferase type-1 domain occupies Ser3–Lys227. The Nucleophile role is filled by Cys85. Catalysis depends on residues His201 and Glu203.

Part of the FGAM synthase complex composed of 1 PurL, 1 PurQ and 2 PurS subunits.

It is found in the cytoplasm. The enzyme catalyses N(2)-formyl-N(1)-(5-phospho-beta-D-ribosyl)glycinamide + L-glutamine + ATP + H2O = 2-formamido-N(1)-(5-O-phospho-beta-D-ribosyl)acetamidine + L-glutamate + ADP + phosphate + H(+). The catalysed reaction is L-glutamine + H2O = L-glutamate + NH4(+). The protein operates within purine metabolism; IMP biosynthesis via de novo pathway; 5-amino-1-(5-phospho-D-ribosyl)imidazole from N(2)-formyl-N(1)-(5-phospho-D-ribosyl)glycinamide: step 1/2. Part of the phosphoribosylformylglycinamidine synthase complex involved in the purines biosynthetic pathway. Catalyzes the ATP-dependent conversion of formylglycinamide ribonucleotide (FGAR) and glutamine to yield formylglycinamidine ribonucleotide (FGAM) and glutamate. The FGAM synthase complex is composed of three subunits. PurQ produces an ammonia molecule by converting glutamine to glutamate. PurL transfers the ammonia molecule to FGAR to form FGAM in an ATP-dependent manner. PurS interacts with PurQ and PurL and is thought to assist in the transfer of the ammonia molecule from PurQ to PurL. This Pelagibacter ubique (strain HTCC1062) protein is Phosphoribosylformylglycinamidine synthase subunit PurQ.